Here is a 110-residue protein sequence, read N- to C-terminus: Large ribosomal subunit protein uL22 (110 aa).

The protein belongs to the universal ribosomal protein uL22 family. In terms of assembly, part of the 50S ribosomal subunit.

This protein binds specifically to 23S rRNA; its binding is stimulated by other ribosomal proteins, e.g. L4, L17, and L20. It is important during the early stages of 50S assembly. It makes multiple contacts with different domains of the 23S rRNA in the assembled 50S subunit and ribosome. Functionally, the globular domain of the protein is located near the polypeptide exit tunnel on the outside of the subunit, while an extended beta-hairpin is found that lines the wall of the exit tunnel in the center of the 70S ribosome. This is Large ribosomal subunit protein uL22 from Syntrophotalea carbinolica (strain DSM 2380 / NBRC 103641 / GraBd1) (Pelobacter carbinolicus).